The following is a 410-amino-acid chain: Argininosuccinate synthase (410 aa).

ATP contacts are provided by residues 13–21 (AYSGGLDTS) and Ala-40. Tyr-91 and Ser-96 together coordinate L-citrulline. Gly-121 lines the ATP pocket. Positions 123, 127, and 128 each coordinate L-aspartate. Asn-127 lines the L-citrulline pocket. The L-citrulline site is built by Arg-131, Ser-182, Ser-191, Glu-267, and Tyr-279.

Belongs to the argininosuccinate synthase family. Type 1 subfamily. As to quaternary structure, homotetramer.

The protein localises to the cytoplasm. The catalysed reaction is L-citrulline + L-aspartate + ATP = 2-(N(omega)-L-arginino)succinate + AMP + diphosphate + H(+). The protein operates within amino-acid biosynthesis; L-arginine biosynthesis; L-arginine from L-ornithine and carbamoyl phosphate: step 2/3. This chain is Argininosuccinate synthase, found in Maricaulis maris (strain MCS10) (Caulobacter maris).